Reading from the N-terminus, the 220-residue chain is Large ribosomal subunit protein uL3 (220 aa).

The protein belongs to the universal ribosomal protein uL3 family. As to quaternary structure, part of the 50S ribosomal subunit. Forms a cluster with proteins L14 and L19.

Functionally, one of the primary rRNA binding proteins, it binds directly near the 3'-end of the 23S rRNA, where it nucleates assembly of the 50S subunit. This Staphylococcus haemolyticus (strain JCSC1435) protein is Large ribosomal subunit protein uL3.